We begin with the raw amino-acid sequence, 128 residues long: MRFAIVVTGPAYGTQQASSAFQFAQALIAEGHELSSVFFYREGVYNANQLTSPASDEFDLVRGWQQLNAQHGVALNICVAAALRRGIVDETEAGRLGLASSNLQSGFTLSGLGALAEASLTCDRVVQF.

C78 serves as the catalytic Cysteine persulfide intermediate.

It belongs to the DsrE/TusD family. As to quaternary structure, heterohexamer, formed by a dimer of trimers. The hexameric TusBCD complex contains 2 copies each of TusB, TusC and TusD. The TusBCD complex interacts with TusE.

It is found in the cytoplasm. In terms of biological role, part of a sulfur-relay system required for 2-thiolation of 5-methylaminomethyl-2-thiouridine (mnm(5)s(2)U) at tRNA wobble positions. Accepts sulfur from TusA and transfers it in turn to TusE. This is Sulfurtransferase TusD from Escherichia coli O17:K52:H18 (strain UMN026 / ExPEC).